The chain runs to 289 residues: B- and T-lymphocyte attenuator (289 aa).

The N-terminal stretch at 1-30 (MKTLPAMLGTGKLFWVFFLIPYLDIWNIHG) is a signal peptide. The region spanning 31–132 (KESCDVQLYI…LIESHSTTLY (102 aa)) is the Ig-like V-type domain. At 31-157 (KESCDVQLYI…MASRPWLLYR (127 aa)) the chain is on the extracellular side. 3 disulfide bridges follow: cysteine 34–cysteine 63, cysteine 58–cysteine 115, and cysteine 72–cysteine 79. N-linked (GlcNAc...) asparagine glycosylation is found at asparagine 75, asparagine 94, and asparagine 110. A helical membrane pass occupies residues 158 to 178 (LLPLGGLPLLITTCFCLFCCL). At 179–289 (RRHQGKQNEL…TEYASICVRS (111 aa)) the chain is on the cytoplasmic side.

Interacts with tyrosine phosphatases PTPN6/SHP-1 and PTPN11/SHP-2. Interacts with TNFRSF14/HVEM (via cysteine-rich domain 1). In terms of processing, phosphorylated on Tyr residues by TNFRSF14 and by antigen receptors cross-linking, both inducing association with PTPN6 and PTPN11. N-glycosylated.

It is found in the cell membrane. Inhibitory receptor on lymphocytes that negatively regulates antigen receptor signaling via PTPN6/SHP-1 and PTPN11/SHP-2. May interact in cis (on the same cell) or in trans (on other cells) with TNFRSF14. In cis interactions, appears to play an immune regulatory role inhibiting in trans interactions in naive T cells to maintain a resting state. In trans interactions, can predominate during adaptive immune response to provide survival signals to effector T cells. The protein is B- and T-lymphocyte attenuator of Homo sapiens (Human).